Here is a 272-residue protein sequence, read N- to C-terminus: ATP-dependent Clp protease proteolytic subunit, mitochondrial (272 aa).

The N-terminal 52 residues, 1–52 (MWPRVLLGEARVAVDGCRALLSRLAVHFSPPWTAVSCSPLRRSLHGTATRAF), are a transit peptide targeting the mitochondrion. Ser149 serves as the catalytic Nucleophile. His174 is a catalytic residue. Lys196 is subject to N6-succinyllysine. Lys207 bears the N6-acetyllysine mark. Positions 240-272 (VLVHPPQDGEDEPELVQKETATAPTDPPAPTST) are disordered.

This sequence belongs to the peptidase S14 family. In terms of assembly, fourteen CLPP subunits assemble into 2 heptameric rings which stack back to back to give a disk-like structure with a central cavity. Component of the ClpXP complex formed by the assembly of two CLPP heptameric rings with two CLPX hexameric rings, giving rise to a symmetrical structure with two central CLPP rings flanked by a CLPX ring at either end of the complex. In terms of tissue distribution, detected in liver (at protein level). High levels found in heart, liver and skeletal muscle.

The protein localises to the mitochondrion matrix. It carries out the reaction Hydrolysis of proteins to small peptides in the presence of ATP and magnesium. alpha-casein is the usual test substrate. In the absence of ATP, only oligopeptides shorter than five residues are hydrolyzed (such as succinyl-Leu-Tyr-|-NHMec, and Leu-Tyr-Leu-|-Tyr-Trp, in which cleavage of the -Tyr-|-Leu- and -Tyr-|-Trp bonds also occurs).. In terms of biological role, protease component of the ClpXP complex that cleaves peptides and various proteins in an ATP-dependent process. Has low peptidase activity in the absence of CLPX. The ClpXP complex can degrade CSN1S1, CSN2 and CSN3, as well as synthetic peptides (in vitro) and may be responsible for a fairly general and central housekeeping function rather than for the degradation of specific substrates. Cleaves PINK1 in the mitochondrion. The sequence is that of ATP-dependent Clp protease proteolytic subunit, mitochondrial from Mus musculus (Mouse).